Here is a 179-residue protein sequence, read N- to C-terminus: Large ribosomal subunit protein uL6 (179 aa).

Belongs to the universal ribosomal protein uL6 family. As to quaternary structure, part of the 50S ribosomal subunit.

Its function is as follows. This protein binds to the 23S rRNA, and is important in its secondary structure. It is located near the subunit interface in the base of the L7/L12 stalk, and near the tRNA binding site of the peptidyltransferase center. The chain is Large ribosomal subunit protein uL6 from Bacillus subtilis (strain 168).